The chain runs to 260 residues: Ava biosynthesis cluster protein M (260 aa).

The N-terminal stretch at 1–15 (MKVLVLGLCRTGTSS) is a signal peptide.

It belongs to the cytochrome P450 family.

Its pathway is secondary metabolite biosynthesis. Part of the cluster that mediates the biosynthesis of a highly modified cyclo-arginine-tryptophan dipeptide (cRW). The first step of the pathway is perfornmed by the arginine-containing cyclodipeptide synthase (RCPDS) avaA that acts as the scaffold-generating enzyme and is responsible for formation of the cyclo-Arg-Trp (cRW) diketopiperazine. AvaB then acts as a multifunctional flavoenzyme that is responsible for generating the cyclo-Arg-formylkynurenine DKP, which can be deformylated by avaC. AvaB then further catalyzes an additional N-oxidation followed by cyclization and dehydration. The next step is an N-acetylation of the guanidine group catalyzed by the arginine N-acetyltransferase avaD. The roles of the additional enzymes identified within the ava cluster still have to be determined. The polypeptide is Ava biosynthesis cluster protein M (Aspergillus versicolor).